The following is a 388-amino-acid chain: GTPase Obg (388 aa).

The Obg domain occupies Ser4 to Leu162. An OBG-type G domain is found at Ala163–Asn329. Residues Gly169–Ser176, Phe194–Glu198, Asp216–Gly219, Thr283–Asp286, and Ser310–Val312 each bind GTP. Residues Ser176 and Thr196 each contribute to the Mg(2+) site. The interval Leu352–Lys388 is disordered. A compositionally biased stretch (acidic residues) spans Gly356–Lys388.

This sequence belongs to the TRAFAC class OBG-HflX-like GTPase superfamily. OBG GTPase family. In terms of assembly, monomer. The cofactor is Mg(2+).

It localises to the cytoplasm. Functionally, an essential GTPase which binds GTP, GDP and possibly (p)ppGpp with moderate affinity, with high nucleotide exchange rates and a fairly low GTP hydrolysis rate. Plays a role in control of the cell cycle, stress response, ribosome biogenesis and in those bacteria that undergo differentiation, in morphogenesis control. In Bacteroides thetaiotaomicron (strain ATCC 29148 / DSM 2079 / JCM 5827 / CCUG 10774 / NCTC 10582 / VPI-5482 / E50), this protein is GTPase Obg.